The chain runs to 310 residues: MPHTSPETEAQRDSNAPLVVVLLGPTASGKTALALELAERFDLEIINVDSRQLYQEMSVGTAKPSPEQQARIRHHLLDLRPPDQPITLQEFQEEALQAVNQSLAKRGAAFLVGGSGLYLKALTAGLRPPAVAPQPALRRQLAQLGQPLCHQLLNTADPEAAVRIASADALRTQRALEVLYATGAPMSRQTSASPPPWRVLELGLNPLDLRQRISARTQALYSQGLVEETRQLRERYGPELPLLQTIGYGEALQVLAGDLSRPAAIAHTTRRTQQFAKRQRTWFRRQHQPHWLPDDNPLNEAGRLIEAGLG.

ATP is bound at residue 24–31; the sequence is GPTASGKT. Position 26-31 (26-31) interacts with substrate; it reads TASGKT. The interaction with substrate tRNA stretch occupies residues 49–52; it reads DSRQ.

The protein belongs to the IPP transferase family. In terms of assembly, monomer. It depends on Mg(2+) as a cofactor.

The catalysed reaction is adenosine(37) in tRNA + dimethylallyl diphosphate = N(6)-dimethylallyladenosine(37) in tRNA + diphosphate. In terms of biological role, catalyzes the transfer of a dimethylallyl group onto the adenine at position 37 in tRNAs that read codons beginning with uridine, leading to the formation of N6-(dimethylallyl)adenosine (i(6)A). In Synechococcus sp. (strain WH7803), this protein is tRNA dimethylallyltransferase.